The chain runs to 238 residues: Lactate utilization protein A (238 aa).

Belongs to the LutA/YkgE family.

Its function is as follows. Is involved in L-lactate degradation and allows cells to grow with lactate as the sole carbon source. The protein is Lactate utilization protein A of Geobacillus sp. (strain WCH70).